The following is a 115-amino-acid chain: Meiotically up-regulated gene 42 protein (115 aa).

In terms of biological role, has a role in meiosis. In Schizosaccharomyces pombe (strain 972 / ATCC 24843) (Fission yeast), this protein is Meiotically up-regulated gene 42 protein (mug42).